The chain runs to 219 residues: Ras-related protein Rab-3D (219 aa).

Position 2 is an N-acetylalanine (alanine 2). Residue 29–37 (GNSSVGKTS) coordinates GDP. The GTP site is built by serine 31, serine 32, valine 33, glycine 34, lysine 35, threonine 36, serine 37, proline 49, and serine 53. Threonine 36 contacts Mg(2+). The Switch 1 motif lies at 49-58 (PAFVSTVGID). Mg(2+) contacts are provided by threonine 54 and aspartate 77. A GTP-binding site is contributed by glycine 80. Residues 80–96 (GQERYRTITTAYYRGAM) carry the Switch 2 motif. Phosphothreonine; by LRRK2 is present on threonine 86. 5 residues coordinate GTP: asparagine 135, lysine 136, aspartate 138, alanine 166, and lysine 167. GDP is bound by residues 135 to 138 (NKCD) and 165 to 167 (SAK). Phosphoserine is present on serine 190. Residues 190–199 (SLEPSSSSGS) show a composition bias toward low complexity. A disordered region spans residues 190-219 (SLEPSSSSGSNGKGPAVGDAPAPQPSSCSC). 2 S-geranylgeranyl cysteine lipidation sites follow: cysteine 217 and cysteine 219. Cysteine 219 bears the Cysteine methyl ester mark.

The protein belongs to the small GTPase superfamily. Rab family. Interacts with RIMS1, RIMS2, RPH3A, RPH3AL and RAB3IP. The GTP-bound form interacts with REP15. Interacts with CHM and CHML; phosphorylation at Thr-86 disrupts these interactions. Interacts with MADD (via uDENN domain); the GTP-bound form is preferred for interaction. The cofactor is Mg(2+). Phosphorylation of Thr-86 in the switch II region by LRRK2 prevents the association of RAB regulatory proteins, including CHM and CHML. Highly expressed in granulocytes of peripheral blood. Constitutively expressed at low levels in all hematopoietic cell lines investigated.

It is found in the cell membrane. The catalysed reaction is GTP + H2O = GDP + phosphate + H(+). With respect to regulation, regulated by guanine nucleotide exchange factors (GEFs) which promote the exchange of bound GDP for free GTP. Regulated by GTPase activating proteins (GAPs) which increase the GTP hydrolysis activity. Inhibited by GDP dissociation inhibitors (GDIs) which prevent Rab-GDP dissociation. The small GTPases Rab are key regulators of intracellular membrane trafficking, from the formation of transport vesicles to their fusion with membranes. Rabs cycle between an inactive GDP-bound form and an active GTP-bound form that is able to recruit to membranes different sets of downstream effectors directly responsible for vesicle formation, movement, tethering and fusion. RAB3D may be involved in the insulin-induced exocytosis of GLUT4-containing vesicles in adipocytes. This is Ras-related protein Rab-3D from Homo sapiens (Human).